The sequence spans 434 residues: Methylenetetrahydrofolate--tRNA-(uracil-5-)-methyltransferase TrmFO (434 aa).

Residue 8-13 (GAGLAG) participates in FAD binding.

It belongs to the MnmG family. TrmFO subfamily. FAD is required as a cofactor.

The protein localises to the cytoplasm. It carries out the reaction uridine(54) in tRNA + (6R)-5,10-methylene-5,6,7,8-tetrahydrofolate + NADH + H(+) = 5-methyluridine(54) in tRNA + (6S)-5,6,7,8-tetrahydrofolate + NAD(+). The catalysed reaction is uridine(54) in tRNA + (6R)-5,10-methylene-5,6,7,8-tetrahydrofolate + NADPH + H(+) = 5-methyluridine(54) in tRNA + (6S)-5,6,7,8-tetrahydrofolate + NADP(+). Its function is as follows. Catalyzes the folate-dependent formation of 5-methyl-uridine at position 54 (M-5-U54) in all tRNAs. This chain is Methylenetetrahydrofolate--tRNA-(uracil-5-)-methyltransferase TrmFO, found in Exiguobacterium sibiricum (strain DSM 17290 / CCUG 55495 / CIP 109462 / JCM 13490 / 255-15).